A 273-amino-acid polypeptide reads, in one-letter code: MSTIRPVFYVSDGTGITAETIGHSLLTQFSGFTFVTERMVFIDDAEKARDASQRILAASERYRVRPIVVNSCVNPYLSVILAESGALMLDVFAPFIGLLEHELNTSRHSRVGRAHGMVDFETYHRRINAMNFALAHDDGVAASYDEAEVVLVAVSRAGKTPTCIYLALHYGIRAANYPLIDEDLNSDQLPLRLRPYRKKLFGLTINPERLQQIRQERRPNSRYAALDTCKREVAAAERMFSAERITTLSTTHTSIEEISSKVLVTLGLQREMF.

153–160 (AVSRAGKT) is an ADP binding site.

The protein belongs to the pyruvate, phosphate/water dikinase regulatory protein family. PSRP subfamily.

It catalyses the reaction [pyruvate, water dikinase] + ADP = [pyruvate, water dikinase]-phosphate + AMP + H(+). The enzyme catalyses [pyruvate, water dikinase]-phosphate + phosphate + H(+) = [pyruvate, water dikinase] + diphosphate. Its function is as follows. Bifunctional serine/threonine kinase and phosphorylase involved in the regulation of the phosphoenolpyruvate synthase (PEPS) by catalyzing its phosphorylation/dephosphorylation. The sequence is that of Putative phosphoenolpyruvate synthase regulatory protein from Xylella fastidiosa (strain M12).